The following is a 268-amino-acid chain: MICOS complex subunit MIC27 (268 aa).

Residues 1–27 constitute a mitochondrion transit peptide; sequence MAAIRMGKLTTMPAGLIYASVSVHAAK. Topologically, residues 28-110 are mitochondrial intermembrane; the sequence is QEESKKQLVK…YVYLKNPPRD (83 aa). Residues 111-129 traverse the membrane as a helical segment; the sequence is FLPKMGVITVSGLAGLVSA. Topologically, residues 130–137 are mitochondrial matrix; the sequence is RKGSKFKK. Residues 138-155 traverse the membrane as a helical segment; it reads ITYPLGLATLGATVCYPV. Topologically, residues 156–268 are mitochondrial intermembrane; that stretch reads QSVIIAKVTA…EDIDMYSTRS (113 aa). Over residues 187-200 the composition is skewed to basic and acidic residues; it reads SKEESLPKPKEKTK. A disordered region spans residues 187–268; it reads SKEESLPKPK…EDIDMYSTRS (82 aa). A Phosphoserine modification is found at Ser204. Residues 249–260 are compositionally biased toward basic and acidic residues; it reads KLMDHGQSHPED.

The protein belongs to the apolipoprotein O/MICOS complex subunit Mic27 family. Component of the mitochondrial contact site and cristae organizing system (MICOS) complex, composed of at least MICOS10/MIC10, CHCHD3/MIC19, CHCHD6/MIC25, APOOL/MIC27, IMMT/MIC60, APOO/MIC23/MIC26 and MICOS13/MIC13. This complex was also known under the names MINOS or MitOS complex. The MICOS complex associates with mitochondrial outer membrane proteins SAMM50, MTX1 and MTX2 (together described as components of the mitochondrial outer membrane sorting assembly machinery (SAM) complex) and DNAJC11, mitochondrial inner membrane protein TMEM11 and with HSPA9. The MICOS and SAM complexes together with DNAJC11 are part of a large protein complex spanning both membranes termed the mitochondrial intermembrane space bridging (MIB) complex. Interacts with MICOS10/MIC10, IMMT/MIC60 and APOO/MIC23/MIC26.

The protein resides in the mitochondrion inner membrane. It localises to the mitochondrion. Component of the MICOS complex, a large protein complex of the mitochondrial inner membrane that plays crucial roles in the maintenance of crista junctions, inner membrane architecture, and formation of contact sites to the outer membrane. Specifically binds to cardiolipin (in vitro) but not to the precursor lipid phosphatidylglycerol. Plays a crucial role in crista junction formation and mitochondrial function,. The sequence is that of MICOS complex subunit MIC27 (APOOL) from Homo sapiens (Human).